Reading from the N-terminus, the 242-residue chain is N-alpha-acetyltransferase 60 (242 aa).

Residues 1-192 (MTEAVPSSAL…GGHPPWTILD (192 aa)) lie on the Cytoplasmic side of the membrane. Residues 13-182 (VSLRLLCHDD…DGFTYVLYIN (170 aa)) form the N-acetyltransferase domain. Tyr38 lines the substrate pocket. N6-acetyllysine; by autocatalysis is present on Lys79. Residue Tyr97 is part of the active site. Residue Leu99 coordinates substrate. 101 to 103 (LGV) serves as a coordination point for acetyl-CoA. An N6-acetyllysine; by autocatalysis mark is found at Lys105, Lys109, and Lys121. 109-114 (KHGIGS) is a binding site for acetyl-CoA. His138 is a catalytic residue. Acetyl-CoA-binding positions include Asn143 and 150–153 (YENR). Residue Lys156 is modified to N6-acetyllysine; by autocatalysis. The tract at residues 162-173 (PYYYSIRGVLKD) is required for homodimerization. Tyr165 lines the substrate pocket. The segment at residues 193–236 (YIQHLGSALANLSPCSIPHRIYRQAQSLLCSFLPWSSISTKGGI) is an intramembrane region (helical). Topologically, residues 237–242 (EYSRTM) are cytoplasmic.

Belongs to the acetyltransferase family. NAA60 subfamily. Monomer and homodimer; monomer in presence of substrate and homodimer in its absence. In terms of processing, acetylated: autoacetylation is required for optimal acetyltransferase activity.

It is found in the golgi apparatus membrane. The catalysed reaction is N-terminal L-methionyl-[transmembrane protein] + acetyl-CoA = N-terminal N(alpha)-acetyl-L-methionyl-[transmembrane protein] + CoA + H(+). It catalyses the reaction L-lysyl-[protein] + acetyl-CoA = N(6)-acetyl-L-lysyl-[protein] + CoA + H(+). N-alpha-acetyltransferase that specifically mediates the acetylation of N-terminal residues of the transmembrane proteins, with a strong preference for N-termini facing the cytosol. Displays N-terminal acetyltransferase activity towards a range of N-terminal sequences including those starting with Met-Lys, Met-Val, Met-Ala and Met-Met. Required for normal chromosomal segregation during anaphase. May also show histone acetyltransferase activity; such results are however unclear in vivo and would require additional experimental evidences. The sequence is that of N-alpha-acetyltransferase 60 (NAA60) from Bos taurus (Bovine).